A 127-amino-acid polypeptide reads, in one-letter code: Small ribosomal subunit protein uS13 (127 aa).

This sequence belongs to the universal ribosomal protein uS13 family. Part of the 30S ribosomal subunit. Forms a loose heterodimer with protein S19. Forms two bridges to the 50S subunit in the 70S ribosome.

Located at the top of the head of the 30S subunit, it contacts several helices of the 16S rRNA. In the 70S ribosome it contacts the 23S rRNA (bridge B1a) and protein L5 of the 50S subunit (bridge B1b), connecting the 2 subunits; these bridges are implicated in subunit movement. Contacts the tRNAs in the A and P-sites. This is Small ribosomal subunit protein uS13 from Pelagibacter ubique (strain HTCC1062).